The chain runs to 330 residues: D-cysteine desulfhydrase (330 aa).

N6-(pyridoxal phosphate)lysine is present on lysine 52.

This sequence belongs to the ACC deaminase/D-cysteine desulfhydrase family. Homodimer. The cofactor is pyridoxal 5'-phosphate.

The enzyme catalyses D-cysteine + H2O = hydrogen sulfide + pyruvate + NH4(+) + H(+). Catalyzes the alpha,beta-elimination reaction of D-cysteine and of several D-cysteine derivatives. It could be a defense mechanism against D-cysteine. The chain is D-cysteine desulfhydrase from Yersinia pestis.